Consider the following 326-residue polypeptide: Dolichyl-phosphate beta-glucosyltransferase (326 aa).

At 1 to 7 (MWTCLCQ) the chain is on the lumenal side. Residues 8-28 (LCFYLLSTLAVAALSIAALVL) traverse the membrane as a helical segment. The Cytoplasmic portion of the chain corresponds to 29-326 (YKTKPYPNIK…RIASIQKKEK (298 aa)).

The protein belongs to the glycosyltransferase 2 family.

It localises to the endoplasmic reticulum membrane. The enzyme catalyses a di-trans,poly-cis-dolichyl phosphate + UDP-alpha-D-glucose = a di-trans,poly-cis-dolichyl beta-D-glucosyl phosphate + UDP. It functions in the pathway protein modification; protein glycosylation. Required for normal production of N-glycosylated proteins in the endoplasmic reticulum (ER). Required for embryonic segmentation, dorsal-ventral patterning and gastrulation. Required for chitin orientation and shaping of the apical and lateral plasma membranes of epidermal cells during cuticle differentiation. Also required for correctly shaping apical membrane topology of the epithelia of other organs such as the midgut and the hindgut. This is Dolichyl-phosphate beta-glucosyltransferase (wol) from Drosophila melanogaster (Fruit fly).